Reading from the N-terminus, the 391-residue chain is EYQSKKIMADHGVTVQRFFVADSANDALEAAQRLKAKEIVLKAQILAGGRGKGVFNSGLKGGVHLTKDPKIVEQLAKQMIGYNLSTKQTPKDGVTVKKVMVAEALNISRETYFAILMDRACNGPVMVGSPQGGVDIEEVAVTSPELIFKEEIDIFEGIKDHQALQMAKNLGFKGPLQQQAADQIKKLYNLFLKIDATQVEVNPFGETPEGQVVCFDAKINFDDNAEFRQKEIFAMDDKSENEPIENEAAKYDLKYIGLDGNIACFVNGAGLAMATCDIISLNGGKPANFLDLGGGVKEAQVYQAFKLLTADPKVEAILVNIFGGIVNCAIIANGITRACRELELKVPLVVRLEGTNVHEAQRILNESGLPIMSANDLEDAAKKAVASVAKK.

In terms of domain architecture, ATP-grasp spans 5-233; sequence KKIMADHGVT…NAEFRQKEIF (229 aa). GTP contacts are provided by residues Q16, 49 to 51, and L105; that span reads GRG. Mg(2+) contacts are provided by N202 and D216. Substrate-binding positions include N267 and 324-326; that span reads GIV.

This sequence belongs to the succinate/malate CoA ligase beta subunit family. GTP-specific subunit beta subfamily. Heterodimer of an alpha and a beta subunit. The beta subunit determines specificity for GTP. The cofactor is Mg(2+). In terms of tissue distribution, widely expressed. Not present in breast muscle.

It is found in the mitochondrion. It carries out the reaction GTP + succinate + CoA = succinyl-CoA + GDP + phosphate. It functions in the pathway carbohydrate metabolism; tricarboxylic acid cycle; succinate from succinyl-CoA (ligase route): step 1/1. Functionally, GTP-specific succinyl-CoA synthetase functions in the citric acid cycle (TCA), coupling the hydrolysis of succinyl-CoA to the synthesis of GTP and thus represents the only step of substrate-level phosphorylation in the TCA. The beta subunit provides nucleotide specificity of the enzyme and binds the substrate succinate, while the binding sites for coenzyme A and phosphate are found in the alpha subunit. This is Succinate--CoA ligase [GDP-forming] subunit beta, mitochondrial from Columba livia (Rock dove).